The primary structure comprises 85 residues: Toxin Cll5c* (85 aa).

An N-terminal signal peptide occupies residues 1–17 (MNSLLIITACLVLFVWA). The LCN-type CS-alpha/beta domain occupies 18–83 (KEGYLVNKST…TYPLPNKSCS (66 aa)). Intrachain disulfides connect cysteine 29-cysteine 82, cysteine 33-cysteine 58, cysteine 42-cysteine 63, and cysteine 46-cysteine 65. Residues 84 to 85 (KK) constitute a propeptide, removed by a carboxypeptidase.

Belongs to the long (4 C-C) scorpion toxin superfamily. Sodium channel inhibitor family. Beta subfamily. As to expression, expressed by the venom gland.

Its subcellular location is the secreted. Beta toxins bind voltage-independently at site-4 of sodium channels (Nav) and shift the voltage of activation toward more negative potentials thereby affecting sodium channel activation and promoting spontaneous and repetitive firing. This Centruroides limpidus (Mexican scorpion) protein is Toxin Cll5c*.